A 320-amino-acid chain; its full sequence is Malate dehydrogenase (320 aa).

NAD(+) contacts are provided by residues 10–15 (GSGMIG) and aspartate 34. Positions 83 and 89 each coordinate substrate. Residues asparagine 96 and 119 to 121 (ITN) contribute to the NAD(+) site. Residues asparagine 121 and arginine 152 each coordinate substrate. Residue histidine 176 is the Proton acceptor of the active site.

The protein belongs to the LDH/MDH superfamily. MDH type 3 family.

It catalyses the reaction (S)-malate + NAD(+) = oxaloacetate + NADH + H(+). In terms of biological role, catalyzes the reversible oxidation of malate to oxaloacetate. This chain is Malate dehydrogenase, found in Brucella suis (strain ATCC 23445 / NCTC 10510).